A 197-amino-acid chain; its full sequence is Superoxide dismutase [Fe] (197 aa).

Positions 26, 75, 157, and 161 each coordinate Fe cation.

The protein belongs to the iron/manganese superoxide dismutase family. As to quaternary structure, homotetramer. The cofactor is Fe cation.

The enzyme catalyses 2 superoxide + 2 H(+) = H2O2 + O2. Its function is as follows. Destroys superoxide anion radicals which are normally produced within the cells and which are toxic to biological systems. This chain is Superoxide dismutase [Fe], found in Cupriavidus metallidurans (strain ATCC 43123 / DSM 2839 / NBRC 102507 / CH34) (Ralstonia metallidurans).